The primary structure comprises 357 residues: Cinnamyl alcohol dehydrogenase 5 (357 aa).

C47 lines the Zn(2+) pocket. Residue T49 participates in NADP(+) binding. H69, E70, C100, C103, C106, C114, and C163 together coordinate Zn(2+). NADP(+) is bound by residues T167, 188-193, 211-216, T251, G275, and 298-300; these read GLGGVG, SSSNKK, and SFI.

This sequence belongs to the zinc-containing alcohol dehydrogenase family. Homodimer. The cofactor is Zn(2+). Expressed at the lateral root initiation sites, in the vascular tissues of the primary lateral root and the root caps. Expressed in the hypocotyl, cotyledon and leaf veins, apical meristem region, at the base of the trichomes, hydathodes and cauline leaves. In stems, expressed in the cells associated with the vascular cambium, interfascicular cambium and the developing xylem. Expressed in the vascular strand of petals and sepals, anthers, stamen filaments, stigma in flowers, and abscission, style and stigmatic regions of siliques.

The catalysed reaction is (E)-cinnamyl alcohol + NADP(+) = (E)-cinnamaldehyde + NADPH + H(+). The enzyme catalyses (E)-coniferol + NADP(+) = (E)-coniferaldehyde + NADPH + H(+). It carries out the reaction (E)-sinapyl alcohol + NADP(+) = (E)-sinapaldehyde + NADPH + H(+). It catalyses the reaction (E)-4-coumaroyl alcohol + NADP(+) = (E)-4-coumaraldehyde + NADPH + H(+). The catalysed reaction is (E)-caffeyl alcohol + NADP(+) = (E)-caffeyl aldehyde + NADPH + H(+). It functions in the pathway aromatic compound metabolism; phenylpropanoid biosynthesis. In terms of biological role, involved in lignin biosynthesis in the floral stem. Catalyzes the final step specific for the production of lignin monomers. Catalyzes the NADPH-dependent reduction of coniferaldehyde, 5-hydroxyconiferaldehyde, sinapaldehyde, 4-coumaraldehyde and caffeyl aldehyde to their respective alcohols. This is Cinnamyl alcohol dehydrogenase 5 from Arabidopsis thaliana (Mouse-ear cress).